The primary structure comprises 524 residues: MSLQLETNKRRTFAIISHPDAGKTTVTEKLLLYGGAIQMAGAVKSRKTDRSATSDWMKMEQERGISVASSVMQFPYKDVMINLLDTPGHEDFSEDTYRTLTAVDSALMVIDVAKGVEDRTIKLMEVCRLRDTPILTFINKLDREGKEPIELLDEVEDVLKINCAPMTWPIGMGKRFKGIYHLYNDTVRLFESADGLNASEGELIHGLDNPELDQKLGSLAEELRDEIELVRGASHEFELDAFLKGTMTPVFFGSAVNNFGLQELLDGFAKYAPAPEGREASTRFVKSDEGKLTGFIFKIQANMDPKHRDRVAFMRIVSGKYEKGMSLKHVRIGKDVKIAKAITFLANKRDQAEVAYPGDIIGLHNHGTIKIGDTFTQGEDLKFTGIPNFAPELFRRAQLKDPMKMKALQKGLTQLSEEGATQLFRPIINNDLILGAVGILQFEVVAQRLKDEYNVTCLFEPVNVSTARWVIGDKAEIDKFLAKVKENVAYDAAGELVYIAPTRVNLTLIEERWPELQFVATREH.

In terms of domain architecture, tr-type G spans 8-276 (NKRRTFAIIS…GFAKYAPAPE (269 aa)). Residues 17–24 (SHPDAGKT), 85–89 (DTPGH), and 139–142 (NKLD) each bind GTP.

This sequence belongs to the TRAFAC class translation factor GTPase superfamily. Classic translation factor GTPase family. PrfC subfamily.

Its subcellular location is the cytoplasm. In terms of biological role, increases the formation of ribosomal termination complexes and stimulates activities of RF-1 and RF-2. It binds guanine nucleotides and has strong preference for UGA stop codons. It may interact directly with the ribosome. The stimulation of RF-1 and RF-2 is significantly reduced by GTP and GDP, but not by GMP. This is Peptide chain release factor 3 from Hydrogenovibrio crunogenus (strain DSM 25203 / XCL-2) (Thiomicrospira crunogena).